A 271-amino-acid chain; its full sequence is MKLFGLIGEKLGHSLSPEIHNKVFKDNNIDGLYNLFSVKKDFENNIVESLKCLGVKGANVTIPYKEKVMDQLDIISHEAKAIGAVNTILIKDGKSYGYNTDYYGFGKMLERAKVNIEGNSFFVLGAGGAARSILKYLEDSKAKKIVLVSRDREKAFKKFKDFNINFMSYGELEEINEEFALINTTPCGMYPNINSVAVSEKVIKKFKVAVDIVYNPLETKFLKMAKDNGLKTVDGLFMLVGQGVKAEEIWNGIKVDKSTEEDIYEELKCRF.

Shikimate contacts are provided by residues 14-16 (SLS) and threonine 61. The active-site Proton acceptor is lysine 65. 2 residues coordinate shikimate: asparagine 86 and aspartate 101. NADP(+)-binding positions include 125–129 (GAGGA) and isoleucine 212. Tyrosine 214 provides a ligand contact to shikimate. Glycine 235 serves as a coordination point for NADP(+).

Belongs to the shikimate dehydrogenase family. As to quaternary structure, homodimer.

The catalysed reaction is shikimate + NADP(+) = 3-dehydroshikimate + NADPH + H(+). The protein operates within metabolic intermediate biosynthesis; chorismate biosynthesis; chorismate from D-erythrose 4-phosphate and phosphoenolpyruvate: step 4/7. Functionally, involved in the biosynthesis of the chorismate, which leads to the biosynthesis of aromatic amino acids. Catalyzes the reversible NADPH linked reduction of 3-dehydroshikimate (DHSA) to yield shikimate (SA). This chain is Shikimate dehydrogenase (NADP(+)), found in Clostridium perfringens (strain ATCC 13124 / DSM 756 / JCM 1290 / NCIMB 6125 / NCTC 8237 / Type A).